Here is a 798-residue protein sequence, read N- to C-terminus: Nuclear cap-binding protein subunit 1 (798 aa).

The 214-residue stretch at 28-241 (EKKLQGVIGK…SLSAQIEALR (214 aa)) folds into the MIF4G domain. Positions 663 to 686 (NKIKEEDDEESDIKMDEDETKEEK) are disordered. The span at 668–682 (EDDEESDIKMDEDET) shows a compositional bias: acidic residues.

This sequence belongs to the NCBP1 family. In terms of assembly, component of the nuclear cap-binding complex (CBC), a heterodimer composed of ncbp-1 and ncbp-1 that interacts with m7GpppG-capped RNA.

Its subcellular location is the nucleus. Its function is as follows. Component of the cap-binding complex (CBC), which binds cotranscriptionally to the 5'-cap of pre-mRNAs and is involved in various processes such as pre-mRNA splicing and RNA-mediated gene silencing (RNAi). The CBC complex is involved in miRNA-mediated RNA interference and is required for primary microRNAs (miRNAs) processing. In the CBC complex, ncbp-1 does not bind directly capped RNAs (m7GpppG-capped RNA) but is required to stabilize the movement of the N-terminal loop of ncbp-2 and lock the CBC into a high affinity cap-binding state with the cap structure. The sequence is that of Nuclear cap-binding protein subunit 1 (ncbp-1) from Caenorhabditis elegans.